Reading from the N-terminus, the 91-residue chain is Cell division topological specificity factor (91 aa).

It belongs to the MinE family.

Prevents the cell division inhibition by proteins MinC and MinD at internal division sites while permitting inhibition at polar sites. This ensures cell division at the proper site by restricting the formation of a division septum at the midpoint of the long axis of the cell. This Lachnospira eligens (strain ATCC 27750 / DSM 3376 / VPI C15-48 / C15-B4) (Eubacterium eligens) protein is Cell division topological specificity factor.